The primary structure comprises 106 residues: Large ribosomal subunit protein P2A (106 aa).

Residue K2 forms a Glycyl lysine isopeptide (Lys-Gly) (interchain with G-Cter in ubiquitin) linkage. Position 16 is a phosphothreonine (T16). Residues S40 and S43 each carry the phosphoserine modification. K48 participates in a covalent cross-link: Glycyl lysine isopeptide (Lys-Gly) (interchain with G-Cter in ubiquitin). The residue at position 49 (S49) is a Phosphoserine. A compositionally biased stretch (low complexity) spans 65–82; it reads PAAGPASAGGAAAASGDA. The segment at 65–106 is disordered; it reads PAAGPASAGGAAAASGDAAAEEEKEEEAAEESDDDMGFGLFD. A compositionally biased stretch (acidic residues) spans 83–100; the sequence is AAEEEKEEEAAEESDDDM. At S96 the chain carries Phosphoserine.

It belongs to the eukaryotic ribosomal protein P1/P2 family. As to quaternary structure, component of the large ribosomal subunit (LSU). Mature yeast ribosomes consist of a small (40S) and a large (60S) subunit. The 40S small subunit contains 1 molecule of ribosomal RNA (18S rRNA) and 33 different proteins (encoded by 57 genes). The large 60S subunit contains 3 rRNA molecules (25S, 5.8S and 5S rRNA) and 46 different proteins (encoded by 81 genes). The 5 acidic ribosomal P-proteins form the stalk structure of the 60S subunit. They are organized as a pentameric complex in which uL10/P0 interacts with 2 heterodimers, P1A-P2B and P1B-P2A. Phosphorylation is not involved in the interaction of the acidic P proteins with the ribosome, however it is suggested to affect the ribosome activity and to participate in a possible ribosome regulatory mechanism. In terms of processing, the N-terminus is not modified.

It is found in the cytoplasm. In terms of biological role, component of the ribosome, a large ribonucleoprotein complex responsible for the synthesis of proteins in the cell. The small ribosomal subunit (SSU) binds messenger RNAs (mRNAs) and translates the encoded message by selecting cognate aminoacyl-transfer RNA (tRNA) molecules. The large subunit (LSU) contains the ribosomal catalytic site termed the peptidyl transferase center (PTC), which catalyzes the formation of peptide bonds, thereby polymerizing the amino acids delivered by tRNAs into a polypeptide chain. The nascent polypeptides leave the ribosome through a tunnel in the LSU and interact with protein factors that function in enzymatic processing, targeting, and the membrane insertion of nascent chains at the exit of the ribosomal tunnel. The sequence is that of Large ribosomal subunit protein P2A from Saccharomyces cerevisiae (strain ATCC 204508 / S288c) (Baker's yeast).